The following is a 216-amino-acid chain: Probable GTP-binding protein EngB (216 aa).

The EngB-type G domain maps to 37 to 214 (AGLEVAFAGR…RAAMIKLIAE (178 aa)). Residues 45–52 (GRSNVGKS), 72–76 (GRTQE), 92–95 (DMPG), 159–162 (TKAD), and 193–195 (TSS) contribute to the GTP site. Mg(2+) contacts are provided by S52 and T74.

Belongs to the TRAFAC class TrmE-Era-EngA-EngB-Septin-like GTPase superfamily. EngB GTPase family. Mg(2+) is required as a cofactor.

Necessary for normal cell division and for the maintenance of normal septation. This Rhodopseudomonas palustris (strain BisB18) protein is Probable GTP-binding protein EngB.